Reading from the N-terminus, the 137-residue chain is QSTVHIVGDNTGWSVPSSPNFYSQWAAGKTFRVGDSLQFNFPANAHNVHEMETKQSFDACNFVNSDNDVERTSPVIERLDELGMHYFVCTVGTHCSNGQKLSINVVAANATVSMPPPSSSPPSSVMPPPVMPPPSPS.

Gln1 bears the Pyrrolidone carboxylic acid mark. Residues 3 to 107 form the Phytocyanin domain; it reads TVHIVGDNTG…GQKLSINVVA (105 aa). Cu cation is bound by residues His46, Cys89, His94, and Gln99. An intrachain disulfide couples Cys60 to Cys95. Residue Asn109 is glycosylated (N-linked (GlcNAc...) asparagine). Residues 112–137 form a disordered region; the sequence is VSMPPPSSSPPSSVMPPPVMPPPSPS. Over residues 114–137 the composition is skewed to pro residues; sequence MPPPSSSPPSSVMPPPVMPPPSPS. Pro115 bears the 4-hydroxyproline; partial mark. 4 positions are modified to 4-hydroxyproline: Pro116, Pro117, Pro121, and Pro122. The residue at position 127 (Pro127) is a 4-hydroxyproline; partial. 4-hydroxyproline is present on residues Pro128, Pro129, Pro133, Pro134, and Pro136.

This Cucumis sativus (Cucumber) protein is Cucumber peeling cupredoxin.